A 485-amino-acid chain; its full sequence is Bcl-2-like protein 13 (485 aa).

Positions 14 to 30 (ETKYVVLSYLGLLSQEK) match the BH4 motif. Phosphoserine is present on Ser-38. A BH3 motif is present at residues 100-116 (MEDCLAHLGEKVSQELK). A BH1 motif is present at residues 147 to 157 (ASGWNKILVPL). Positions 193-206 (YIIQQGGWGTVFSL) match the BH2 motif. A disordered region spans residues 218–248 (AEDSNDIYILPSDNSGQVSPPESPTVTTSWQ). Polar residues predominate over residues 229–248 (SDNSGQVSPPESPTVTTSWQ). One copy of the A repeat lies at 246-256 (SWQSESLPVSL). Residues Ser-259, Ser-261, Ser-303, Ser-326, Ser-371, Ser-375, Ser-410, Ser-420, Ser-426, Ser-429, and Ser-444 each carry the phosphoserine modification. The A; approximate repeat unit spans residues 261–271 (SWHTESLPVSL). The tract at residues 418–451 (EESLVEELSPASEKKPVPPSEGKSRLSPAGEMKP) is disordered. The stretch at 425-441 (LSPASEKKPVPPSEGKS) is one B repeat. One copy of the B; approximate repeat lies at 443–459 (LSPAGEMKPMPLSEGKS). A helical membrane pass occupies residues 460–480 (ILLFGGAAAVAILAVAIGVAL).

It belongs to the Bcl-2 family. As to quaternary structure, monomer. In terms of tissue distribution, ubiquitous, with the highest levels of expression in heart, placenta and pancreas.

It localises to the mitochondrion membrane. The protein localises to the nucleus. Functionally, may promote the activation of caspase-3 and apoptosis. This chain is Bcl-2-like protein 13 (BCL2L13), found in Homo sapiens (Human).